The primary structure comprises 385 residues: Putative UDP-N-acetylglucosamine 2-epimerase (385 aa).

This sequence belongs to the UDP-N-acetylglucosamine 2-epimerase family.

The protein resides in the cytoplasm. The catalysed reaction is UDP-N-acetyl-alpha-D-glucosamine = UDP-N-acetyl-alpha-D-mannosamine. The protein is Putative UDP-N-acetylglucosamine 2-epimerase of Clostridium acetobutylicum (strain ATCC 824 / DSM 792 / JCM 1419 / IAM 19013 / LMG 5710 / NBRC 13948 / NRRL B-527 / VKM B-1787 / 2291 / W).